We begin with the raw amino-acid sequence, 399 residues long: Arylacetamide deacetylase (399 aa).

Over 1-4 (MRKK) the chain is Cytoplasmic. Residues 5-25 (YFGFLILGVLLAGYIYVPLPD) traverse the membrane as a helical; Signal-anchor for type II membrane protein segment. Residues 26–399 (NVEEPWKIML…QYINWLHENL (374 aa)) are Lumenal-facing. An Involved in the stabilization of the negatively charged intermediate by the formation of the oxyanion hole motif is present at residues 111–113 (HGG). Residues Cys-116 and Cys-340 are joined by a disulfide bond. Residue Ser-189 is part of the active site. Residue Asn-282 is glycosylated (N-linked (GlcNAc...) asparagine). Residues Asp-343 and His-373 contribute to the active site.

This sequence belongs to the 'GDXG' lipolytic enzyme family.

The protein localises to the endoplasmic reticulum membrane. Its subcellular location is the microsome membrane. It catalyses the reaction a triacylglycerol + H2O = a diacylglycerol + a fatty acid + H(+). Its function is as follows. Displays cellular triglyceride lipase activity in liver, increases the levels of intracellular fatty acids derived from the hydrolysis of newly formed triglyceride stores and plays a role in very low-density lipoprotein assembly. Displays serine esterase activity in liver. Deacetylates a variety of arylacetamide substrates, including xenobiotic compounds and procarcinogens, converting them to the primary arylamide compounds and increasing their toxicity. This Bos taurus (Bovine) protein is Arylacetamide deacetylase (AADAC).